The following is a 217-amino-acid chain: Flagellin B1 (217 aa).

The propeptide occupies 1 to 12; the sequence is MKVFEFLKGKRG.

The protein belongs to the archaeal flagellin family.

The protein localises to the archaeal flagellum. Functionally, flagellin is the subunit protein which polymerizes to form the filaments of archaeal flagella. The chain is Flagellin B1 (flaB1) from Methanocaldococcus jannaschii (strain ATCC 43067 / DSM 2661 / JAL-1 / JCM 10045 / NBRC 100440) (Methanococcus jannaschii).